We begin with the raw amino-acid sequence, 333 residues long: Procathepsin L (333 aa).

Positions 1-17 (MNPTFILAALCLGIASA) are cleaved as a signal peptide. A propeptide spans 18-113 (TLTFNHSLEA…KVFQEPLFYE (96 aa)) (activation peptide). E122 is a Zn(2+) binding site. Disulfide bonds link C135/C178 and C169/C211. Residue C138 is part of the active site. Residues E163, D184, E199, E205, E209, D227, D250, H253, D273, and D275 each coordinate Zn(2+). A disulfide bridge connects residues C269 and C322. The active site involves H276. The propeptide occupies 289–291 (ESD). The active site involves N300.

The protein belongs to the peptidase C1 family. Dimer of a heavy and a light chain linked by disulfide bonds. Interacts with Long isoform of CD74/Ii chain; the interaction stabilizes the conformation of mature CTSL. Post-translationally, during export along the endocytic pathway, pro-CTSL undergoes several proteolytic cleavages to generate the CTSL single-chain and two-chain mature forms, composed of a heavy chain linked to a light chain by disulfide bonds. Autocleavage; produces the single-chain CTSL after cleavage of the propeptide. The cleavage can be intermolecular.

The protein localises to the lysosome. It is found in the apical cell membrane. Its subcellular location is the cytoplasmic vesicle. It localises to the secretory vesicle. The protein resides in the chromaffin granule. The protein localises to the secreted. It is found in the extracellular space. The catalysed reaction is Specificity close to that of papain. As compared to cathepsin B, cathepsin L exhibits higher activity toward protein substrates, but has little activity on Z-Arg-Arg-NHMec, and no peptidyl-dipeptidase activity.. Its activity is regulated as follows. Inhibited by the propeptide produced by autocleavage. Long isoform of CD74/Ii chain stabilizes the conformation of mature CTSL by binding to its active site and serving as a chaperone to help maintain a pool of mature enzyme in endocytic compartments and extracellular space of APCs. IFNG enhances the conversion into the CTSL mature and active form. Inhibited by CST6. Inhibited by the glycopeptide antibiotic teicoplanin. Inhibited by amantadine. In terms of biological role, thiol protease important for the overall degradation of proteins in lysosomes. Plays a critical for normal cellular functions such as general protein turnover, antigen processing and bone remodeling. Involved in the solubilization of cross-linked TG/thyroglobulin and in the subsequent release of thyroid hormone thyroxine (T4) by limited proteolysis of TG/thyroglobulin in the thyroid follicle lumen. In neuroendocrine chromaffin cells secretory vesicles, catalyzes the prohormone proenkephalin processing to the active enkephalin peptide neurotransmitter. In thymus, regulates CD4(+) T cell positive selection by generating the major histocompatibility complex class II (MHCII) bound peptide ligands presented by cortical thymic epithelial cells. Also mediates invariant chain processing in cortical thymic epithelial cells. Major elastin-degrading enzyme at neutral pH. Accumulates as a mature and active enzyme in the extracellular space of antigen presenting cells (APCs) to regulate degradation of the extracellular matrix in the course of inflammation. Secreted form generates endostatin from COL18A1. Critical for cardiac morphology and function. Plays an important role in hair follicle morphogenesis and cycling, as well as epidermal differentiation. Required for maximal stimulation of steroidogenesis by TIMP1. The sequence is that of Procathepsin L (CTSL) from Chlorocebus aethiops (Green monkey).